The following is an 877-amino-acid chain: Leucine--tRNA ligase (877 aa).

The 'HIGH' region signature appears at Pro-43 to His-53. The 'KMSKS' region signature appears at Lys-628–Ser-632. Residue Lys-631 participates in ATP binding.

It belongs to the class-I aminoacyl-tRNA synthetase family.

The protein localises to the cytoplasm. The catalysed reaction is tRNA(Leu) + L-leucine + ATP = L-leucyl-tRNA(Leu) + AMP + diphosphate. The chain is Leucine--tRNA ligase from Brucella canis (strain ATCC 23365 / NCTC 10854 / RM-666).